Here is a 157-residue protein sequence, read N- to C-terminus: Eukaryotic translation initiation factor 5A-1 (157 aa).

Position 2 is an N-acetylserine (Ser2). Ser2 bears the Phosphoserine mark. Phosphothreonine occurs at positions 7 and 10. Residue Lys51 is modified to Hypusine. The residue at position 74 (Ser74) is a Phosphoserine. Lys86 participates in a covalent cross-link: Glycyl lysine isopeptide (Lys-Gly) (interchain with G-Cter in ubiquitin).

This sequence belongs to the eIF-5A family. As to quaternary structure, homodimer. Binds to 80S ribosomes. Actively translating ribosomes show mutually exclusive binding of eIF5a (HYP2 or ANB1) and EFT1/eEF2. Interacts with DYS1 and LIA1. Lys-51 undergoes hypusination, a unique post-translational modification that consists in the addition of a butylamino group from spermidine to lysine side chain, leading to the formation of the unusual amino acid hypusine. eIF-5As are the only known proteins to undergo this modification, which is essential for their function.

The protein resides in the cytoplasm. Translation factor that promotes translation elongation and termination, particularly upon ribosome stalling at specific amino acid sequence contexts. Binds between the exit (E) and peptidyl (P) site of the ribosome and promotes rescue of stalled ribosome: specifically required for efficient translation of polyproline-containing peptides as well as other motifs that stall the ribosome. Acts as a ribosome quality control (RQC) cofactor by joining the RQC complex to facilitate peptidyl transfer during CAT tailing step. Involved in actin dynamics and cell cycle progression, mRNA decay and probably in a pathway involved in stress response and maintenance of cell wall integrity. The sequence is that of Eukaryotic translation initiation factor 5A-1 (HYP2) from Saccharomyces cerevisiae (strain ATCC 204508 / S288c) (Baker's yeast).